A 419-amino-acid chain; its full sequence is MSRYVFTSESVTEGHPDKICDQVSDAVLDALLAQDSSSRVACETVVNTGLCMITGEVTSKAQVDFIHLVRDVIREIGYSGARAGGFDANSCAVLVALDQQSPDIAQGVDEADDHEGDPLDKVGAGDQGIMFGYACNETPELMPLPISLAHRLSRRLAEVRHNGTLDYLLPDGKTQVSVVYENDKPVAIDTILISTQHTAEVAGLSDEQQVRERISDDLWTHVVEPATADLPLKPSKDSTRYLVNPTGKFVVGGPQGDAGLTGRKIIVDTYGGYARHGGGAFSGKDPTKVDRSAAYAARYVAKCLVAAGLAQRAEVQLSYAIGVAKPVSILVESFGTGKVSNAELTELVQQHFDLRPGAIIQQFKLREMPALSGGRFYRDTAAYGHFGRPDLKLPWEDVENKASTLLQAEASRLQQGNTL.

Position 15 (His-15) interacts with ATP. Asp-17 is a binding site for Mg(2+). Position 43 (Glu-43) interacts with K(+). L-methionine contacts are provided by Glu-56 and Gln-100. The segment at 100–110 is flexible loop; it reads QSPDIAQGVDE. ATP contacts are provided by residues 171–173, 248–249, Asp-257, 263–264, Ala-280, and Lys-284; these read DGK, KF, and RK. L-methionine is bound at residue Asp-257. Residue Lys-288 participates in L-methionine binding.

It belongs to the AdoMet synthase family. In terms of assembly, homotetramer; dimer of dimers. Requires Mg(2+) as cofactor. K(+) is required as a cofactor.

The protein localises to the cytoplasm. It carries out the reaction L-methionine + ATP + H2O = S-adenosyl-L-methionine + phosphate + diphosphate. The protein operates within amino-acid biosynthesis; S-adenosyl-L-methionine biosynthesis; S-adenosyl-L-methionine from L-methionine: step 1/1. Functionally, catalyzes the formation of S-adenosylmethionine (AdoMet) from methionine and ATP. The overall synthetic reaction is composed of two sequential steps, AdoMet formation and the subsequent tripolyphosphate hydrolysis which occurs prior to release of AdoMet from the enzyme. The polypeptide is S-adenosylmethionine synthase (Synechococcus sp. (strain WH7803)).